Reading from the N-terminus, the 103-residue chain is Co-chaperonin GroES (103 aa).

The protein belongs to the GroES chaperonin family. In terms of assembly, heptamer of 7 subunits arranged in a ring. Interacts with the chaperonin GroEL.

The protein localises to the cytoplasm. In terms of biological role, together with the chaperonin GroEL, plays an essential role in assisting protein folding. The GroEL-GroES system forms a nano-cage that allows encapsulation of the non-native substrate proteins and provides a physical environment optimized to promote and accelerate protein folding. GroES binds to the apical surface of the GroEL ring, thereby capping the opening of the GroEL channel. The protein is Co-chaperonin GroES of Prochlorococcus marinus (strain SARG / CCMP1375 / SS120).